Consider the following 39-residue polypeptide: Phospholipase A2 (39 aa).

The active site involves His36.

Belongs to the phospholipase A2 family. Group III subfamily. Ca(2+) is required as a cofactor. Expressed by the venom gland.

The protein localises to the secreted. The catalysed reaction is a 1,2-diacyl-sn-glycero-3-phosphocholine + H2O = a 1-acyl-sn-glycero-3-phosphocholine + a fatty acid + H(+). PLA2 catalyzes the calcium-dependent hydrolysis of the 2-acyl groups in 3-sn-phosphoglycerides. The protein is Phospholipase A2 of Heloderma horridum horridum (Mexican beaded lizard).